Consider the following 260-residue polypeptide: Snake venom serine protease homolog KN7 (260 aa).

An N-terminal signal peptide occupies residues 1-18 (MVLIRVLANLLILQLSYA). The propeptide occupies 19-24 (QKSSEL). The 227-residue stretch at 25-251 (IIGGDECNIN…HLDWIKSIIA (227 aa)) folds into the Peptidase S1 domain. 6 disulfides stabilise this stretch: Cys31–Cys165, Cys52–Cys68, Cys100–Cys258, Cys144–Cys212, Cys176–Cys191, and Cys202–Cys227. 3 N-linked (GlcNAc...) asparagine glycosylation sites follow: Asn83, Asn123, and Asn124.

The protein belongs to the peptidase S1 family. Snake venom subfamily. In terms of tissue distribution, expressed by the venom gland.

The protein resides in the secreted. In terms of biological role, snake venom serine protease homolog that may act in the hemostasis system of the prey. This chain is Snake venom serine protease homolog KN7, found in Trimeresurus stejnegeri (Chinese green tree viper).